Here is a 286-residue protein sequence, read N- to C-terminus: Ribose-phosphate pyrophosphokinase (286 aa).

ATP contacts are provided by residues 34-36 (DGE) and 91-92 (RQ). Mg(2+)-binding residues include His-124 and Asp-161. The active site involves Lys-184. D-ribose 5-phosphate is bound by residues Arg-186, Asp-210, and 214–218 (STGGT).

This sequence belongs to the ribose-phosphate pyrophosphokinase family. Class III (archaeal) subfamily. The cofactor is Mg(2+).

The protein resides in the cytoplasm. The catalysed reaction is D-ribose 5-phosphate + ATP = 5-phospho-alpha-D-ribose 1-diphosphate + AMP + H(+). It participates in metabolic intermediate biosynthesis; 5-phospho-alpha-D-ribose 1-diphosphate biosynthesis; 5-phospho-alpha-D-ribose 1-diphosphate from D-ribose 5-phosphate (route I): step 1/1. Its function is as follows. Involved in the biosynthesis of the central metabolite phospho-alpha-D-ribosyl-1-pyrophosphate (PRPP) via the transfer of pyrophosphoryl group from ATP to 1-hydroxyl of ribose-5-phosphate (Rib-5-P). The sequence is that of Ribose-phosphate pyrophosphokinase from Thermoplasma acidophilum (strain ATCC 25905 / DSM 1728 / JCM 9062 / NBRC 15155 / AMRC-C165).